Here is a 340-residue protein sequence, read N- to C-terminus: Adenosine kinase (340 aa).

D292 is a catalytic residue.

The protein belongs to the carbohydrate kinase PfkB family. The cofactor is Mg(2+).

The enzyme catalyses adenosine + ATP = AMP + ADP + H(+). It participates in purine metabolism; AMP biosynthesis via salvage pathway; AMP from adenosine: step 1/1. This chain is Adenosine kinase (ado1), found in Schizosaccharomyces pombe (strain 972 / ATCC 24843) (Fission yeast).